The primary structure comprises 113 residues: uncharacterized protein (113 aa).

Residues 1-19 (MLSPLSPRIIAAFTTAVGA) form the signal peptide.

To M.tuberculosis Rv1291c.

This is an uncharacterized protein from Mycobacterium tuberculosis (strain CDC 1551 / Oshkosh).